The chain runs to 508 residues: 2-isopropylmalate synthase (508 aa).

Positions 5 to 267 (IKIFDTTLRD…THRIDTTQIY (263 aa)) constitute a Pyruvate carboxyltransferase domain. Residues aspartate 14, histidine 202, histidine 204, and asparagine 238 each contribute to the Mn(2+) site. Residues 390-508 (VIDSFQINSG…SEIGESIISQ (119 aa)) form a regulatory domain region.

The protein belongs to the alpha-IPM synthase/homocitrate synthase family. LeuA type 1 subfamily. In terms of assembly, homodimer. Requires Mn(2+) as cofactor.

The protein resides in the cytoplasm. The enzyme catalyses 3-methyl-2-oxobutanoate + acetyl-CoA + H2O = (2S)-2-isopropylmalate + CoA + H(+). It participates in amino-acid biosynthesis; L-leucine biosynthesis; L-leucine from 3-methyl-2-oxobutanoate: step 1/4. Its function is as follows. Catalyzes the condensation of the acetyl group of acetyl-CoA with 3-methyl-2-oxobutanoate (2-ketoisovalerate) to form 3-carboxy-3-hydroxy-4-methylpentanoate (2-isopropylmalate). The polypeptide is 2-isopropylmalate synthase (Ruminiclostridium cellulolyticum (strain ATCC 35319 / DSM 5812 / JCM 6584 / H10) (Clostridium cellulolyticum)).